Reading from the N-terminus, the 404-residue chain is Probable tRNA sulfurtransferase (404 aa).

The THUMP domain occupies 60–165 (QPVAESLKQI…EEAAYISYET (106 aa)). ATP is bound by residues 183-184 (ML), 208-209 (HF), Arg265, Gly287, and Gln296.

Belongs to the ThiI family.

It localises to the cytoplasm. It catalyses the reaction [ThiI sulfur-carrier protein]-S-sulfanyl-L-cysteine + a uridine in tRNA + 2 reduced [2Fe-2S]-[ferredoxin] + ATP + H(+) = [ThiI sulfur-carrier protein]-L-cysteine + a 4-thiouridine in tRNA + 2 oxidized [2Fe-2S]-[ferredoxin] + AMP + diphosphate. The enzyme catalyses [ThiS sulfur-carrier protein]-C-terminal Gly-Gly-AMP + S-sulfanyl-L-cysteinyl-[cysteine desulfurase] + AH2 = [ThiS sulfur-carrier protein]-C-terminal-Gly-aminoethanethioate + L-cysteinyl-[cysteine desulfurase] + A + AMP + 2 H(+). Its pathway is cofactor biosynthesis; thiamine diphosphate biosynthesis. Catalyzes the ATP-dependent transfer of a sulfur to tRNA to produce 4-thiouridine in position 8 of tRNAs, which functions as a near-UV photosensor. Also catalyzes the transfer of sulfur to the sulfur carrier protein ThiS, forming ThiS-thiocarboxylate. This is a step in the synthesis of thiazole, in the thiamine biosynthesis pathway. The sulfur is donated as persulfide by IscS. This Streptococcus gordonii (strain Challis / ATCC 35105 / BCRC 15272 / CH1 / DL1 / V288) protein is Probable tRNA sulfurtransferase.